Consider the following 505-residue polypeptide: DNA primase DnaG (505 aa).

The Toprim domain occupies 167–241 (DAVIVVEGRA…DVDYVAFAPP (75 aa)). The Mg(2+) site is built by E173, D215, and D217. Positions 268 to 410 (DEPNLREAAT…PLDNEPRSIE (143 aa)) are disordered. The segment covering 318-327 (AGVVAGGARS) has biased composition (low complexity). 2 stretches are compositionally biased toward acidic residues: residues 349–376 (GEVD…DAEF) and 384–402 (PNLD…DAPL).

Belongs to the archaeal DnaG primase family. In terms of assembly, forms a ternary complex with MCM helicase and DNA. The cofactor is Mg(2+).

It carries out the reaction ssDNA + n NTP = ssDNA/pppN(pN)n-1 hybrid + (n-1) diphosphate.. Functionally, RNA polymerase that catalyzes the synthesis of short RNA molecules used as primers for DNA polymerase during DNA replication. The polypeptide is DNA primase DnaG (Halorubrum lacusprofundi (strain ATCC 49239 / DSM 5036 / JCM 8891 / ACAM 34)).